The chain runs to 160 residues: Outer membrane protein MT2024.1 (160 aa).

The first 22 residues, 1–22 (MSWSRVIAYGLLPGLALALTCG), serve as a signal peptide directing secretion.

The protein localises to the cell outer membrane. The protein is Outer membrane protein MT2024.1 of Mycobacterium tuberculosis (strain CDC 1551 / Oshkosh).